We begin with the raw amino-acid sequence, 196 residues long: ATP-dependent Clp protease proteolytic subunit (196 aa).

The active-site Nucleophile is Ser101. His126 is an active-site residue.

Belongs to the peptidase S14 family. Component of the chloroplastic Clp protease core complex.

It localises to the plastid. The protein resides in the chloroplast stroma. It catalyses the reaction Hydrolysis of proteins to small peptides in the presence of ATP and magnesium. alpha-casein is the usual test substrate. In the absence of ATP, only oligopeptides shorter than five residues are hydrolyzed (such as succinyl-Leu-Tyr-|-NHMec, and Leu-Tyr-Leu-|-Tyr-Trp, in which cleavage of the -Tyr-|-Leu- and -Tyr-|-Trp bonds also occurs).. In terms of biological role, cleaves peptides in various proteins in a process that requires ATP hydrolysis. Has a chymotrypsin-like activity. Plays a major role in the degradation of misfolded proteins. The chain is ATP-dependent Clp protease proteolytic subunit from Gossypium barbadense (Sea Island cotton).